Consider the following 315-residue polypeptide: Ribosomal RNA small subunit methyltransferase H (315 aa).

Residues 33-35, aspartate 52, phenylalanine 84, aspartate 106, and glutamine 113 each bind S-adenosyl-L-methionine; that span reads GGH. The disordered stretch occupies residues 290-315; sequence PITASTSELENNNRSHSAKLRVAEKL. Residues 292 to 304 are compositionally biased toward polar residues; it reads TASTSELENNNRS.

The protein belongs to the methyltransferase superfamily. RsmH family.

The protein localises to the cytoplasm. It carries out the reaction cytidine(1402) in 16S rRNA + S-adenosyl-L-methionine = N(4)-methylcytidine(1402) in 16S rRNA + S-adenosyl-L-homocysteine + H(+). Functionally, specifically methylates the N4 position of cytidine in position 1402 (C1402) of 16S rRNA. The polypeptide is Ribosomal RNA small subunit methyltransferase H (Lactobacillus helveticus (strain DPC 4571)).